Here is a 552-residue protein sequence, read N- to C-terminus: Glutamine--tRNA ligase (552 aa).

The short motif at 34–44 (PEPNGYLHIGH) is the 'HIGH' region element. Residues 35-37 (EPN) and 41-47 (HIGHAKS) each bind ATP. L-glutamine is bound by residues Asp-67 and Tyr-212. ATP contacts are provided by residues Thr-231, 261-262 (RL), and 269-271 (MSK). The 'KMSKS' region signature appears at 268–272 (IMSKR).

Belongs to the class-I aminoacyl-tRNA synthetase family. In terms of assembly, monomer.

The protein resides in the cytoplasm. It carries out the reaction tRNA(Gln) + L-glutamine + ATP = L-glutaminyl-tRNA(Gln) + AMP + diphosphate. This is Glutamine--tRNA ligase from Pectobacterium atrosepticum (strain SCRI 1043 / ATCC BAA-672) (Erwinia carotovora subsp. atroseptica).